A 258-amino-acid polypeptide reads, in one-letter code: Ribosomal RNA small subunit methyltransferase A (258 aa).

H13, L15, G40, E61, D85, and N106 together coordinate S-adenosyl-L-methionine.

This sequence belongs to the class I-like SAM-binding methyltransferase superfamily. rRNA adenine N(6)-methyltransferase family. RsmA subfamily.

Its subcellular location is the cytoplasm. It catalyses the reaction adenosine(1518)/adenosine(1519) in 16S rRNA + 4 S-adenosyl-L-methionine = N(6)-dimethyladenosine(1518)/N(6)-dimethyladenosine(1519) in 16S rRNA + 4 S-adenosyl-L-homocysteine + 4 H(+). Its function is as follows. Specifically dimethylates two adjacent adenosines (A1518 and A1519) in the loop of a conserved hairpin near the 3'-end of 16S rRNA in the 30S particle. May play a critical role in biogenesis of 30S subunits. The protein is Ribosomal RNA small subunit methyltransferase A of Porphyromonas gingivalis (strain ATCC 33277 / DSM 20709 / CIP 103683 / JCM 12257 / NCTC 11834 / 2561).